The following is a 256-amino-acid chain: Gene 18 protein (256 aa).

The protein belongs to the herpesviridae UL79 family.

In Saimiriine herpesvirus 2 (strain 11) (SaHV-2), this protein is Gene 18 protein (18).